The following is a 435-amino-acid chain: F-box/FBD/LRR-repeat protein At5g44980 (435 aa).

One can recognise an F-box domain in the interval 3 to 49 (RDYISELPDSLLTQILLELRTKDSVKTSVLSKRWRNLWLNVPGLELF). LRR repeat units follow at residues 88 to 114 (CKGYRDRLMELIGTLVDHGLQHLYVFM), 138 to 162 (LHNVELKNSDFVVSLPCLKILKLEN), 165 to 190 (HGEDGPLVVEKLISGCSVLEDLELIR), 191 to 217 (PFDIRTHKVLLLLRVSSQTLKSFTLHF), 250 to 275 (VKNLSSLFSIDIGTKFNPLRHEDLRM), and 324 to 349 (MWSSSTHLLEAFLESCPNLKNLILEY). The FBD domain maps to 355 to 405 (REQVDFTNVPQCLISTLEYVEIKEPNEKSTIKLVNYFLENSAVLKKLTLRF).

The chain is F-box/FBD/LRR-repeat protein At5g44980 from Arabidopsis thaliana (Mouse-ear cress).